The primary structure comprises 471 residues: Glutamate--tRNA ligase (471 aa).

A 'HIGH' region motif is present at residues 9–19; it reads PSPTGYLHVGG. Zn(2+) contacts are provided by Cys98, Cys100, Cys125, and His127. The 'KMSKS' region motif lies at 237–241; the sequence is KLSKR. Residue Lys240 participates in ATP binding.

Belongs to the class-I aminoacyl-tRNA synthetase family. Glutamate--tRNA ligase type 1 subfamily. Monomer. It depends on Zn(2+) as a cofactor.

It is found in the cytoplasm. It carries out the reaction tRNA(Glu) + L-glutamate + ATP = L-glutamyl-tRNA(Glu) + AMP + diphosphate. Functionally, catalyzes the attachment of glutamate to tRNA(Glu) in a two-step reaction: glutamate is first activated by ATP to form Glu-AMP and then transferred to the acceptor end of tRNA(Glu). This chain is Glutamate--tRNA ligase, found in Citrobacter koseri (strain ATCC BAA-895 / CDC 4225-83 / SGSC4696).